Reading from the N-terminus, the 446-residue chain is Sensor-type histidine kinase PrrB (446 aa).

Helical transmembrane passes span 19 to 39 (VVAT…VVWV) and 151 to 171 (LLIC…LAAF). An HAMP domain is found at 172 to 222 (AVRPFKQLAQQTRSVDAGGEAPRVEVHGATEAVEIAEAMRGMLQRIWNEQN). In terms of domain architecture, Histidine kinase spans 237–446 (VSSHELRTPL…RLLLRISAPS (210 aa)). Phosphohistidine; by autocatalysis is present on His-240.

Autophosphorylated.

The protein localises to the cell membrane. It carries out the reaction ATP + protein L-histidine = ADP + protein N-phospho-L-histidine.. Functionally, member of the two-component regulatory system PrrB/PrrA that is involved specifically in early intracellular multiplication of Mycobacterium and is essential for its viability. Functions as a sensor protein kinase which is autophosphorylated at a histidine residue and transfers its phosphate group to the conserved aspartic acid residue in the regulatory domain of PrrA. In turn, PrrA binds to the upstream promoter regions of target genes including itself to positively regulate their expression. In Mycobacterium leprae (strain TN), this protein is Sensor-type histidine kinase PrrB (prrB).